The following is a 478-amino-acid chain: MKKVIVIGINHAGTSFIRTLLSKSKDFKVNAYDRNTNISFLGCGIALAVSGVVKNTDDLFYSNPEELKQMGANIFMSHDVTNIDLIKKQVTVRDLTSNKEFTDQFDQLVIASGAWPICMNVENKVTHKPLEFNYTDKYCGNVKNLISCKLYQHALTLIDSFRKDKTIKSVAIVGSGYIGLELAEAAWLCKKQVTVIDLLDKPAGNNFDHEFTDELEKVMQKDGLKLMMGCSVKGFVVDSTNNVVKGVETDKGIVNADLVIQSIGFRPSTKFVPKDQNFEFIHNGSIKVNEFLQALNHKDVYVIGGCAAIYNAASEQYENIDLATNAVKSGLVAAMHIIGSNQVKLQSIVGTNALHIFGLNLAACGLTEQRAKKLGFDVGISVVDDNDRPEFMGSYDKVRFKLVYDKKTLRILGAQLLSWNTNHSEIIFYIALAIQKQMLLTELGLVDVYFLPHYNKPFNFVLATVLQALGFSYYIPKK.

FAD-binding positions include 8–12, D33, C43, V80, 111–114, K149, and Y177; these read GINHA and ASGA. Residue H11 is the Proton acceptor of the active site. The active-site Redox-active is C43. The residue at position 43 (C43) is a Cysteine sulfinic acid (-SO2H). NAD(+)-binding positions include 170–185, D197, and G264; that span reads VAIVGSGYIGLELAEA. Residues 295-305, L322, A323, and T324 each bind FAD; that span reads LNHKDVYVIGG. A353 is a binding site for NAD(+). F450 lines the FAD pocket.

Belongs to the class-III pyridine nucleotide-disulfide oxidoreductase family. FAD serves as cofactor.

It catalyses the reaction 2 NADH + O2 + 2 H(+) = 2 NAD(+) + 2 H2O. Catalyzes the four-electron reduction of molecular oxygen to water. This is NADH oxidase (nox) from Mycoplasma genitalium (strain ATCC 33530 / DSM 19775 / NCTC 10195 / G37) (Mycoplasmoides genitalium).